We begin with the raw amino-acid sequence, 506 residues long: Maturase K (506 aa).

The protein belongs to the intron maturase 2 family. MatK subfamily.

The protein resides in the plastid. The protein localises to the chloroplast. Functionally, usually encoded in the trnK tRNA gene intron. Probably assists in splicing its own and other chloroplast group II introns. The polypeptide is Maturase K (Medicago truncatula (Barrel medic)).